Consider the following 164-residue polypeptide: Low molecular weight protein-tyrosine-phosphatase (164 aa).

Residue C9 is the Nucleophile of the active site. R15 is a catalytic residue. Residue D128 is the Proton donor of the active site.

This sequence belongs to the low molecular weight phosphotyrosine protein phosphatase family.

It carries out the reaction O-phospho-L-tyrosyl-[protein] + H2O = L-tyrosyl-[protein] + phosphate. Functionally, acts on tyrosine phosphorylated proteins, low-MW aryl phosphates and natural and synthetic acyl phosphates. May be involved in the regulation of sulfur amino acid metabolism. The sequence is that of Low molecular weight protein-tyrosine-phosphatase (ptpA) from Streptomyces coelicolor (strain ATCC BAA-471 / A3(2) / M145).